Reading from the N-terminus, the 610-residue chain is tRNA uridine 5-carboxymethylaminomethyl modification enzyme MnmG (610 aa).

Residue 14-19 (GAGHAG) coordinates FAD. 274–288 (GPRYCPSIEDKIVKF) provides a ligand contact to NAD(+).

It belongs to the MnmG family. As to quaternary structure, homodimer. Heterotetramer of two MnmE and two MnmG subunits. FAD serves as cofactor.

It is found in the cytoplasm. Its function is as follows. NAD-binding protein involved in the addition of a carboxymethylaminomethyl (cmnm) group at the wobble position (U34) of certain tRNAs, forming tRNA-cmnm(5)s(2)U34. The sequence is that of tRNA uridine 5-carboxymethylaminomethyl modification enzyme MnmG from Chlamydia trachomatis serovar A (strain ATCC VR-571B / DSM 19440 / HAR-13).